Consider the following 421-residue polypeptide: Histidine--tRNA ligase (421 aa).

This sequence belongs to the class-II aminoacyl-tRNA synthetase family. As to quaternary structure, homodimer.

It localises to the cytoplasm. The enzyme catalyses tRNA(His) + L-histidine + ATP = L-histidyl-tRNA(His) + AMP + diphosphate + H(+). The protein is Histidine--tRNA ligase of Francisella tularensis subsp. mediasiatica (strain FSC147).